The following is a 122-amino-acid chain: Alpha-amylase/trypsin inhibitor (122 aa).

5 cysteine pairs are disulfide-bonded: cysteine 6/cysteine 55, cysteine 20/cysteine 44, cysteine 29/cysteine 85, cysteine 45/cysteine 103, and cysteine 57/cysteine 114.

It belongs to the protease inhibitor I6 (cereal trypsin/alpha-amylase inhibitor) family. As to expression, seeds.

The protein localises to the secreted. Its function is as follows. May play a protective role against endo- and exogenous hydrolytic activities in the Ragi seeds. This is Alpha-amylase/trypsin inhibitor from Eleusine coracana (Indian finger millet).